We begin with the raw amino-acid sequence, 674 residues long: E3 ubiquitin ligase Rnf157 (674 aa).

Residues 277–316 (CVVCLSDVRDTLILPCRHLCLCNACADTLRYQASNCPICR) form an RING-type zinc finger. Disordered stretches follow at residues 376–404 (LTPS…GSDI) and 433–610 (QNSS…TGRE). Residues 469-508 (TPESENLTLSSSGAIDQSSCTGTPLSPTISSPEDPLSSSL) show a composition bias toward polar residues. Positions 509–526 (AQSIMSMASSHSQQSQLS) are enriched in low complexity. The segment covering 527–537 (TDTVSSMSGSY) has biased composition (polar residues). Residues 583–604 (EEMDAEGNVTEEEFASPEEDDG) are compositionally biased toward acidic residues.

Its subcellular location is the cytoplasm. It carries out the reaction S-ubiquitinyl-[E2 ubiquitin-conjugating enzyme]-L-cysteine + [acceptor protein]-L-lysine = [E2 ubiquitin-conjugating enzyme]-L-cysteine + N(6)-ubiquitinyl-[acceptor protein]-L-lysine.. Functionally, E3 ubiquitin ligase that ubiquitinates apbb1 for its degradation by the proteasome and thus prevents apoptosis and promotes survival of neurons. Has a dual role in neurons as it is also required for dendrite growth and maintenance for which its ligase activity is not critical. May act as a scaffold molecule to regulate this process. Acts as a downstream effector of the interconnected PI3K and MAPK signaling pathways and thus participates in the regulation of the cell cycle. This is E3 ubiquitin ligase Rnf157 (rnf157) from Xenopus laevis (African clawed frog).